The primary structure comprises 281 residues: Imidazole glycerol phosphate synthase subunit HisF (281 aa).

Residues D12 and D131 contribute to the active site. The segment at 256–281 is disordered; the sequence is VRQAEPLPQPAREGLGDSARRAMSSG.

The protein belongs to the HisA/HisF family. Heterodimer of HisH and HisF.

Its subcellular location is the cytoplasm. It carries out the reaction 5-[(5-phospho-1-deoxy-D-ribulos-1-ylimino)methylamino]-1-(5-phospho-beta-D-ribosyl)imidazole-4-carboxamide + L-glutamine = D-erythro-1-(imidazol-4-yl)glycerol 3-phosphate + 5-amino-1-(5-phospho-beta-D-ribosyl)imidazole-4-carboxamide + L-glutamate + H(+). The protein operates within amino-acid biosynthesis; L-histidine biosynthesis; L-histidine from 5-phospho-alpha-D-ribose 1-diphosphate: step 5/9. Functionally, IGPS catalyzes the conversion of PRFAR and glutamine to IGP, AICAR and glutamate. The HisF subunit catalyzes the cyclization activity that produces IGP and AICAR from PRFAR using the ammonia provided by the HisH subunit. The protein is Imidazole glycerol phosphate synthase subunit HisF of Thermosynechococcus vestitus (strain NIES-2133 / IAM M-273 / BP-1).